The chain runs to 98 residues: Cell division protein FtsB (98 aa).

At Met-1–Arg-3 the chain is on the cytoplasmic side. Residues Leu-4 to Phe-21 form a helical membrane-spanning segment. The Periplasmic portion of the chain corresponds to Gly-22–Asp-98. A coiled-coil region spans residues His-31 to Glu-74.

This sequence belongs to the FtsB family. Part of a complex composed of FtsB, FtsL and FtsQ.

The protein localises to the cell inner membrane. Functionally, essential cell division protein. May link together the upstream cell division proteins, which are predominantly cytoplasmic, with the downstream cell division proteins, which are predominantly periplasmic. The polypeptide is Cell division protein FtsB (Shewanella halifaxensis (strain HAW-EB4)).